The following is a 267-amino-acid chain: MNMSVLTLQEYEFEKQFNENEAIQWMQENWKKSFLFSALYAAFIFGGRHLMNKRAKFELRKPLVLWSLTLAVFSIFGALRTGAYMLYILMTKGLKQSVCDQSFYNGPVSKFWAYAFVLSKAPELGDTIFIILRKQKLIFLHWYHHITVLLYSWYSYKDMVAGGGWFMTMNYGVHAVMYSYYALRAAGFRVSRKFAMFITLSQITQMLMGCVINYLVFNWMQHDNDQCYSHFQNIFWSSLMYLSYLVLFCHFFFEAYIGKVKKATKAE.

The N-linked (GlcNAc...) asparagine glycan is linked to Asn2. The next 7 helical transmembrane spans lie at 34–51 (FLFS…RHLM), 70–90 (LAVF…YILM), 111–131 (FWAY…IFII), 136–156 (KLIF…WYSY), 159–179 (MVAG…VMYS), 197–217 (FITL…YLVF), and 234–254 (IFWS…FFFE).

The protein belongs to the ELO family. ELOVL6 subfamily. In terms of processing, N-Glycosylated. Highly expressed in adrenal gland, liver, white adipose tissue (WAT), adult and fetal brain, cerebellum, spinal cord, testis, skin and peripheral nerve; where lipogenesis and steroidogenesis are active. Weakly expressed in kidney, heart, skeletal muscle, lung, and spleen.

The protein localises to the endoplasmic reticulum membrane. The enzyme catalyses a very-long-chain acyl-CoA + malonyl-CoA + H(+) = a very-long-chain 3-oxoacyl-CoA + CO2 + CoA. It catalyses the reaction hexadecanoyl-CoA + malonyl-CoA + H(+) = 3-oxooctadecanoyl-CoA + CO2 + CoA. The catalysed reaction is (9Z)-hexadecenoyl-CoA + malonyl-CoA + H(+) = 3-oxo-(11Z)-octadecenoyl-CoA + CO2 + CoA. It carries out the reaction dodecanoyl-CoA + malonyl-CoA + H(+) = 3-oxotetradecanoyl-CoA + CO2 + CoA. The enzyme catalyses tetradecanoyl-CoA + malonyl-CoA + H(+) = 3-oxohexadecanoyl-CoA + CO2 + CoA. It catalyses the reaction (9Z)-octadecenoyl-CoA + malonyl-CoA + H(+) = 3-oxo-(11Z)-eicosenoyl-CoA + CO2 + CoA. The catalysed reaction is (9Z,12Z)-octadecadienoyl-CoA + malonyl-CoA + H(+) = (11Z,14Z)-3-oxoicosa-11,14-dienoyl-CoA + CO2 + CoA. It carries out the reaction (9Z,12Z,15Z)-octadecatrienoyl-CoA + malonyl-CoA + H(+) = (11Z,14Z,17Z)-3-oxoeicosatrienoyl-CoA + CO2 + CoA. The protein operates within lipid metabolism; fatty acid biosynthesis. Its activity is regulated as follows. The reaction is stimulated by the presence of HSD17B12, the enzyme catalyzing the second step of the elongation cycle. Catalyzes the first and rate-limiting reaction of the four reactions that constitute the long-chain fatty acids elongation cycle. This endoplasmic reticulum-bound enzymatic process allows the addition of 2 carbons to the chain of long- and very long-chain fatty acids (VLCFAs) per cycle. Condensing enzyme that elongates fatty acids with 12, 14 and 16 carbons with higher activity toward C16:0 acyl-CoAs. Catalyzes the synthesis of unsaturated C16 long chain fatty acids and, to a lesser extent, C18:0 and those with low desaturation degree. May participate in the production of saturated and monounsaturated VLCFAs of different chain lengths that are involved in multiple biological processes as precursors of membrane lipids and lipid mediators. This is Very long chain fatty acid elongase 6 from Mus musculus (Mouse).